Here is a 547-residue protein sequence, read N- to C-terminus: Serine beta-lactamase-like protein LACTB, mitochondrial (547 aa).

Residues 1–115 constitute a mitochondrion transit peptide; the sequence is MYRLMSAVTA…RAIESSRDLL (115 aa). Positions 62 to 83 are enriched in low complexity; that stretch reads GAAPAQSPAAPDPEASPLAEPP. The segment at 62–96 is disordered; that stretch reads GAAPAQSPAAPDPEASPLAEPPQEQSLAPWSPQTP. Ser164 acts as the Acyl-ester intermediate in catalysis. N6-succinyllysine occurs at positions 283 and 284. An N6-acetyllysine mark is found at Lys297 and Lys342.

Belongs to the peptidase S12 family. Expressed predominantly in skeletal muscle.

It is found in the mitochondrion. Mitochondrial serine protease that acts as a regulator of mitochondrial lipid metabolism. Acts by decreasing protein levels of PISD, a mitochondrial enzyme that converts phosphatidylserine (PtdSer) to phosphatidylethanolamine (PtdEtn), thereby affecting mitochondrial lipid metabolism. It is unclear whether it acts directly by mediating proteolysis of PISD or by mediating proteolysis of another lipid metabolism protein. Acts as a tumor suppressor that has the ability to inhibit proliferation of multiple types of breast cancer cells: probably by promoting decreased levels of PISD, thereby affecting mitochondrial lipid metabolism. In Homo sapiens (Human), this protein is Serine beta-lactamase-like protein LACTB, mitochondrial.